The primary structure comprises 73 residues: Cell division protein ZapB (73 aa).

The stretch at 3–66 (LELLSQLETK…SWSDKVNGLV (64 aa)) forms a coiled coil.

Belongs to the ZapB family. As to quaternary structure, homodimer. The ends of the coiled-coil dimer bind to each other, forming polymers. Interacts with FtsZ.

Its subcellular location is the cytoplasm. Functionally, non-essential, abundant cell division factor that is required for proper Z-ring formation. It is recruited early to the divisome by direct interaction with FtsZ, stimulating Z-ring assembly and thereby promoting cell division earlier in the cell cycle. Its recruitment to the Z-ring requires functional FtsA or ZipA. The polypeptide is Cell division protein ZapB (Shewanella frigidimarina (strain NCIMB 400)).